The chain runs to 281 residues: Ribosomal RNA small subunit methyltransferase A (281 aa).

The S-adenosyl-L-methionine site is built by Asn-18, Leu-20, Gly-45, Glu-66, Asp-91, and Asn-118.

Belongs to the class I-like SAM-binding methyltransferase superfamily. rRNA adenine N(6)-methyltransferase family. RsmA subfamily.

It localises to the cytoplasm. The enzyme catalyses adenosine(1518)/adenosine(1519) in 16S rRNA + 4 S-adenosyl-L-methionine = N(6)-dimethyladenosine(1518)/N(6)-dimethyladenosine(1519) in 16S rRNA + 4 S-adenosyl-L-homocysteine + 4 H(+). Its function is as follows. Specifically dimethylates two adjacent adenosines (A1518 and A1519) in the loop of a conserved hairpin near the 3'-end of 16S rRNA in the 30S particle. May play a critical role in biogenesis of 30S subunits. The protein is Ribosomal RNA small subunit methyltransferase A of Histophilus somni (strain 129Pt) (Haemophilus somnus).